The following is a 1012-amino-acid chain: Vacuolar membrane protease (1012 aa).

Residues 1 to 60 lie on the Cytoplasmic side of the membrane; sequence MRRSTDPRNLLVRRGPLLVDGESAISELDPGFFPTGDAPKMSSTTRRRFNLIAFTPGPVT. A helical membrane pass occupies residues 61 to 81; sequence VISSLVYLALLIPLLLVHTIV. At 82-432 the chain is on the vacuolar side; that stretch reads PSAPKSNPKG…SFAVFRLHTL (351 aa). N159 carries an N-linked (GlcNAc...) asparagine glycan. The Zn(2+) site is built by H215 and D227. Residue E261 is the Proton acceptor of the active site. Zn(2+)-binding residues include E262, E287, and H360. A helical membrane pass occupies residues 433–453; the sequence is FAISVTLLVVCPIVLFVIGII. The Cytoplasmic portion of the chain corresponds to 454–487; that stretch reads LSKMDKMYLFSIHETIPETKEKVSVRGLRGLFRY. The chain crosses the membrane as a helical span at residues 488-508; it reads PIILVVSSGILIGLSYLLAKV. Residues 509 to 518 lie on the Vacuolar side of the membrane; it reads NPFIVHSSSY. Residues 519-539 traverse the membrane as a helical segment; it reads AVWSMMLSSWIFMTWFLSCIA. Topologically, residues 540-550 are cytoplasmic; it reads DFFRPSALHRA. A helical transmembrane segment spans residues 551-571; that stretch reads YTFTWQLLVMWVLLVISTVYV. The Vacuolar portion of the chain corresponds to 572-575; sequence NQHD. A helical membrane pass occupies residues 576–596; sequence IAAGYFIVFYFAGTFLATLIS. The Cytoplasmic segment spans residues 597-710; that stretch reads YLELFALPNK…WSASLPTWTW (114 aa). Over residues 614 to 629 the composition is skewed to polar residues; that stretch reads SQYPSRLGSNRSSRIL. The segment at 614-660 is disordered; the sequence is SQYPSRLGSNRSSRILSPSADELPTGGDNNGEIYDGEEEPTESSSLL. The helical transmembrane segment at 711-731 threads the bilayer; sequence VLQFLFVGPVVIMFIGQLGLF. Residues 732–743 lie on the Vacuolar side of the membrane; the sequence is LTSAMNQVGADG. The chain crosses the membrane as a helical span at residues 744–764; the sequence is VGLLVVYIAIAVFSVLLLIPL. The Cytoplasmic segment spans residues 765–777; sequence SPFIHRFTYHVPT. Residues 778 to 798 form a helical membrane-spanning segment; the sequence is FLLLVFIATLIYNLAAFPFSA. Residues 799-1012 are Vacuolar-facing; the sequence is ENRLKIFFVQ…DGLVEVSRGF (214 aa). N842 and N878 each carry an N-linked (GlcNAc...) asparagine glycan.

The protein belongs to the peptidase M28 family. Requires Zn(2+) as cofactor.

Its subcellular location is the vacuole membrane. Its function is as follows. May be involved in vacuolar sorting and osmoregulation. This is Vacuolar membrane protease from Coccidioides posadasii (strain C735) (Valley fever fungus).